The following is an 89-amino-acid chain: Small ribosomal subunit protein uS14 (89 aa).

It belongs to the universal ribosomal protein uS14 family. As to quaternary structure, part of the 30S ribosomal subunit. Contacts proteins S3 and S10.

Binds 16S rRNA, required for the assembly of 30S particles and may also be responsible for determining the conformation of the 16S rRNA at the A site. The sequence is that of Small ribosomal subunit protein uS14 from Chlorobaculum parvum (strain DSM 263 / NCIMB 8327) (Chlorobium vibrioforme subsp. thiosulfatophilum).